We begin with the raw amino-acid sequence, 182 residues long: Ribosome maturation factor RimM (182 aa).

In terms of domain architecture, PRC barrel spans 102–182 (EEGDYYWKDL…TIEVDWDPGF (81 aa)).

It belongs to the RimM family. In terms of assembly, binds ribosomal protein uS19.

The protein localises to the cytoplasm. Its function is as follows. An accessory protein needed during the final step in the assembly of 30S ribosomal subunit, possibly for assembly of the head region. Essential for efficient processing of 16S rRNA. May be needed both before and after RbfA during the maturation of 16S rRNA. It has affinity for free ribosomal 30S subunits but not for 70S ribosomes. The polypeptide is Ribosome maturation factor RimM (Salmonella gallinarum (strain 287/91 / NCTC 13346)).